The following is a 376-amino-acid chain: tRNA-specific 2-thiouridylase MnmA (376 aa).

Residues 17-24 and M43 each bind ATP; that span reads GMSGGVDS. Residues 103–105 are interaction with target base in tRNA; sequence NPD. The active-site Nucleophile is C108. A disulfide bridge links C108 with C205. An ATP-binding site is contributed by G132. The segment at 155–157 is interaction with tRNA; sequence KDQ. The Cysteine persulfide intermediate role is filled by C205. The interval 315-316 is interaction with tRNA; the sequence is RY.

Belongs to the MnmA/TRMU family.

It is found in the cytoplasm. It catalyses the reaction S-sulfanyl-L-cysteinyl-[protein] + uridine(34) in tRNA + AH2 + ATP = 2-thiouridine(34) in tRNA + L-cysteinyl-[protein] + A + AMP + diphosphate + H(+). Catalyzes the 2-thiolation of uridine at the wobble position (U34) of tRNA, leading to the formation of s(2)U34. The protein is tRNA-specific 2-thiouridylase MnmA of Dichelobacter nodosus (strain VCS1703A).